The following is a 161-amino-acid chain: Phosphotransferase enzyme IIB component GlvB (161 aa).

A helical transmembrane segment spans residues 10–32 (LTQIAIGLCFTLLYFVVFRTLIL). Positions 70-152 (LDQAAGILQA…DSLINSHQSA (83 aa)) constitute a PTS EIIB type-1 domain. Cys-92 (phosphocysteine intermediate) is an active-site residue.

It is found in the cell inner membrane. In terms of biological role, the phosphoenolpyruvate-dependent sugar phosphotransferase system (sugar PTS), a major carbohydrate active -transport system, catalyzes the phosphorylation of incoming sugar substrates concomitantly with their translocation across the cell membrane. This operon may be cryptic in wild-type K12 strains. The polypeptide is Phosphotransferase enzyme IIB component GlvB (Escherichia coli (strain K12)).